The primary structure comprises 883 residues: Translation initiation factor IF-2 (883 aa).

Disordered stretches follow at residues 1-96 (MVDT…RSGM) and 132-259 (QRRA…RGRL). Residues 57–66 (PAEPAAAAPE) are compositionally biased toward low complexity. Positions 72 to 87 (TPAPPAVSPRQQPRPS) are enriched in pro residues. Residues 132–188 (QRRAAQELVDKAEREAAEVRRKAEEERHRHEEETKRKAETEAKKRFGEAEPAKKPAD) show a composition bias toward basic and acidic residues. Over residues 191-217 (PASTSTTTTAPRAPVTTTTRPPAVAAE) the composition is skewed to low complexity. A tr-type G domain is found at 380 to 551 (PRSPVVTVMG…ALQAELLDLK (172 aa)). The tract at residues 389 to 396 (GHVDHGKT) is G1. 389–396 (GHVDHGKT) lines the GTP pocket. The segment at 414 to 418 (GITQH) is G2. The interval 437 to 440 (DTPG) is G3. GTP contacts are provided by residues 437–441 (DTPGH) and 491–494 (NKID). Residues 491-494 (NKID) form a G4 region. A G5 region spans residues 527–529 (SAK).

The protein belongs to the TRAFAC class translation factor GTPase superfamily. Classic translation factor GTPase family. IF-2 subfamily.

Its subcellular location is the cytoplasm. Its function is as follows. One of the essential components for the initiation of protein synthesis. Protects formylmethionyl-tRNA from spontaneous hydrolysis and promotes its binding to the 30S ribosomal subunits. Also involved in the hydrolysis of GTP during the formation of the 70S ribosomal complex. This is Translation initiation factor IF-2 from Rhodopseudomonas palustris (strain BisB5).